We begin with the raw amino-acid sequence, 150 residues long: 2-aminobenzenesulfonate 2,3-dioxygenase subunit beta (150 aa).

The protein belongs to the bacterial ring-hydroxylating dioxygenase beta subunit family. In terms of assembly, heterotetramer with a alpha2beta2 structure.

It carries out the reaction 2-aminobenzenesulfonate + NADH + O2 + 2 H(+) = 2,3-dihydroxybenzenesulfonate + NH4(+) + NAD(+). With respect to regulation, inhibited by o-phenanthroline. Beta subunit of the oxygenase component of the 2-aminobenzenesulfonate 2,3-dioxygenase system (deaminating) (ABSDOS). Can use 2-aminobenzenesulfonate (ABS), benzenesulfonate (BS), 4-toluenesulfonate (TS), 2-nitrobenzenesulfonate, 3- and 4-aminobenzenesulfonates, 4-chloro- and 4-hydroxybenzenesulfonates and pyridine-3-sulfonate as substrates. No desulfonation of ABS to aminocatechol or aminophenol detected. This is 2-aminobenzenesulfonate 2,3-dioxygenase subunit beta from Alcaligenes sp.